A 257-amino-acid polypeptide reads, in one-letter code: MSGFDNLNSGFYQTSYSIDEQSQQSYDYGGSGGPYSKQYAGCDYSQQGRFVPPDMMQPQQTYTGQIYQPTQAYPPTTPQPFYGDSFEEEPPLLEELGINFDHIWQKTLTVLHPLRAADGSIMNETDLAGPVVFCLAFGATLLLAGKIQFGYVYGISAIGCLGMFCLLNLMSMTGVSFGCVASVLGYCLLPMILLSSFAVVFSLQGMVGILLTATIIGWCSFSASKIFISALAMDGQQLLVAYPCALLYGVFALISVF.

Over methionine 1–glutamate 124 the chain is Cytoplasmic. The interval proline 75–lysine 106 is interaction with Sec23. A helical membrane pass occupies residues threonine 125–glycine 145. Lysine 146 is a topological domain (lumenal). Residues isoleucine 147–leucine 167 traverse the membrane as a helical segment. Topologically, residues asparagine 168–threonine 173 are cytoplasmic. The chain crosses the membrane as a helical span at residues glycine 174–leucine 194. Residues serine 195–serine 196 lie on the Lumenal side of the membrane. A helical transmembrane segment spans residues phenylalanine 197–glycine 217. Residues tryptophan 218–glutamine 236 lie on the Cytoplasmic side of the membrane. A helical membrane pass occupies residues glutamine 237 to phenylalanine 257.

Belongs to the YIP1 family. Interacts with the COPII coat components Sec23 (SEC23A and/or SEC23B) and Sec24 (SEC24A and/or SEC24B). Interacts with YIF1A. May interact with RAB1A. Interacts with YIPF3 and YIPF4. Ubiquitously expressed.

Its subcellular location is the golgi apparatus. The protein resides in the cis-Golgi network membrane. It localises to the cytoplasmic vesicle. The protein localises to the COPII-coated vesicle. It is found in the endoplasmic reticulum membrane. In terms of biological role, plays a role in transport between endoplasmic reticulum and Golgi. In pancreatic beta cells, required to transport proinsulin from endoplasmic reticulum into the Golgi. This is Protein YIPF5 from Mus musculus (Mouse).